The following is a 371-amino-acid chain: Carbamoyl phosphate synthase small chain (371 aa).

Positions Met-1–Val-186 are CPSase. Residues Ser-52, Gly-233, and Gly-235 each contribute to the L-glutamine site. A Glutamine amidotransferase type-1 domain is found at Val-185–Ala-371. Catalysis depends on Cys-261, which acts as the Nucleophile. L-glutamine-binding residues include Leu-262, Gln-265, Asn-303, Gly-305, and Tyr-306. Residues His-346 and Glu-348 contribute to the active site.

It belongs to the CarA family. As to quaternary structure, composed of two chains; the small (or glutamine) chain promotes the hydrolysis of glutamine to ammonia, which is used by the large (or ammonia) chain to synthesize carbamoyl phosphate. Tetramer of heterodimers (alpha,beta)4.

It carries out the reaction hydrogencarbonate + L-glutamine + 2 ATP + H2O = carbamoyl phosphate + L-glutamate + 2 ADP + phosphate + 2 H(+). The enzyme catalyses L-glutamine + H2O = L-glutamate + NH4(+). It functions in the pathway amino-acid biosynthesis; L-arginine biosynthesis; carbamoyl phosphate from bicarbonate: step 1/1. It participates in pyrimidine metabolism; UMP biosynthesis via de novo pathway; (S)-dihydroorotate from bicarbonate: step 1/3. Small subunit of the glutamine-dependent carbamoyl phosphate synthetase (CPSase). CPSase catalyzes the formation of carbamoyl phosphate from the ammonia moiety of glutamine, carbonate, and phosphate donated by ATP, constituting the first step of 2 biosynthetic pathways, one leading to arginine and/or urea and the other to pyrimidine nucleotides. The small subunit (glutamine amidotransferase) binds and cleaves glutamine to supply the large subunit with the substrate ammonia. The protein is Carbamoyl phosphate synthase small chain of Sulfolobus acidocaldarius (strain ATCC 33909 / DSM 639 / JCM 8929 / NBRC 15157 / NCIMB 11770).